Here is a 290-residue protein sequence, read N- to C-terminus: Elongation factor Ts (290 aa).

Positions 79-82 (TDFV) are involved in Mg(2+) ion dislocation from EF-Tu.

The protein belongs to the EF-Ts family.

It is found in the cytoplasm. Functionally, associates with the EF-Tu.GDP complex and induces the exchange of GDP to GTP. It remains bound to the aminoacyl-tRNA.EF-Tu.GTP complex up to the GTP hydrolysis stage on the ribosome. The sequence is that of Elongation factor Ts from Pseudoalteromonas atlantica (strain T6c / ATCC BAA-1087).